We begin with the raw amino-acid sequence, 278 residues long: Putative peptidase Cgl1093 (278 aa).

An N-terminal signal peptide occupies residues 1–32 (MSSASFTTKALSVLAALTAASAPLVAASPAHA). Residues 33-236 (LANARNVTGS…HAEWIAYYTG (204 aa)) enclose the Peptidase S1 domain. Residues Cys59 and Cys75 are joined by a disulfide bond. Residues His74, Asp123, and Ser189 each act as charge relay system in the active site.

The protein belongs to the peptidase S1 family.

Its subcellular location is the secreted. The chain is Putative peptidase Cgl1093 from Corynebacterium glutamicum (strain ATCC 13032 / DSM 20300 / JCM 1318 / BCRC 11384 / CCUG 27702 / LMG 3730 / NBRC 12168 / NCIMB 10025 / NRRL B-2784 / 534).